The chain runs to 498 residues: MASQGTKRSYEQMETGGERQNATEIRASVGRMVSGIGRFYIQMCTELKLSDYEGRLIQNSITIERMVLSAFDERRNRYLEEHPSAGKDPKKTGGPIYRRRDGKWVRELILYDKEEIRRIWRQANNGEDATAGLTHLMIWHSNLNDATYQRTRALVRTGMDPRMCSLMQGSTLPRRSGAAGAAIKGVGTMVMELIRMIKRGINDRNFWRGENGRRTRIAYERMCNILKGKFQTAAQRAMMDQVRESRNPGNAEIEDLIFLARSALILRGSVAHKSCLPACVYGLAVASGYDFEREGYSLVGIDPFRLLQNSQVFSLIRPNENPAHKSQLVWMACHSAAFEDLRVSSFIRGTRVVPRGQLSTRGVQIASNENMEAMDSNTLELRSRYWAIRTRSGGNTNQQRASAGQISVQPTFSVQRNLPFERATIMAAFTGNTEGRTSDMRTEIIRMMESARPEDVSFQGRGVFELSDEKATNPIVPSFDMNNEGSYFFGDNAEEYDN.

The short motif at 1-18 (MASQGTKRSYEQMETGGE) is the Unconventional nuclear localization signal element. The disordered stretch occupies residues 1 to 21 (MASQGTKRSYEQMETGGERQN). A Bipartite nuclear localization signal motif is present at residues 198–216 (KRGINDRNFWRGENGRRTR).

It belongs to the influenza viruses nucleoprotein family. As to quaternary structure, homomultimerizes to form the nucleocapsid. May bind host exportin-1/XPO1. Binds to viral genomic RNA. Protein-RNA contacts are mediated by a combination of electrostatic interactions between positively charged residues and the phosphate backbone and planar interactions between aromatic side chains and bases. Post-translationally, late in virus-infected cells, may be cleaved from a 56-kDa protein to a 53-kDa protein by a cellular caspase. This cleavage might be a marker for the onset of apoptosis in infected cells or have a specific function in virus host interaction.

The protein localises to the virion. It is found in the host nucleus. Functionally, encapsidates the negative strand viral RNA, protecting it from nucleases. The encapsidated genomic RNA is termed the ribonucleoprotein (RNP) and serves as template for transcription and replication. The RNP needs to be localized in the host nucleus to start an infectious cycle, but is too large to diffuse through the nuclear pore complex. NP comprises at least 2 nuclear localization signals that are responsible for the active RNP import into the nucleus through cellular importin alpha/beta pathway. Later in the infection, nclear export of RNPs are mediated through viral proteins NEP interacting with M1 which binds nucleoproteins. It is possible that nucleoprotein binds directly host exportin-1/XPO1 and plays an active role in RNPs nuclear export. M1 interaction with RNP seems to hide nucleoprotein's nuclear localization signals. Soon after a virion infects a new cell, M1 dissociates from the RNP under acidification of the virion driven by M2 protein. Dissociation of M1 from RNP unmasks nucleoprotein's nuclear localization signals, targeting the RNP to the nucleus. The sequence is that of Nucleoprotein from Influenza A virus (strain A/Guinea fowl/Hong Kong/38/2002 H5N1 genotype X0).